A 375-amino-acid polypeptide reads, in one-letter code: Erythronate-4-phosphate dehydrogenase (375 aa).

Ser49 contacts substrate. Positions 150 and 178 each coordinate NAD(+). Arg211 is an active-site residue. Asp231 serves as a coordination point for NAD(+). Residue Glu236 is part of the active site. The active-site Proton donor is His253. Gly256 provides a ligand contact to NAD(+).

This sequence belongs to the D-isomer specific 2-hydroxyacid dehydrogenase family. PdxB subfamily. In terms of assembly, homodimer.

It localises to the cytoplasm. It catalyses the reaction 4-phospho-D-erythronate + NAD(+) = (R)-3-hydroxy-2-oxo-4-phosphooxybutanoate + NADH + H(+). It participates in cofactor biosynthesis; pyridoxine 5'-phosphate biosynthesis; pyridoxine 5'-phosphate from D-erythrose 4-phosphate: step 2/5. Catalyzes the oxidation of erythronate-4-phosphate to 3-hydroxy-2-oxo-4-phosphonooxybutanoate. This Hydrogenovibrio crunogenus (strain DSM 25203 / XCL-2) (Thiomicrospira crunogena) protein is Erythronate-4-phosphate dehydrogenase.